The following is a 150-amino-acid chain: Cell division protein SepF (150 aa).

Belongs to the SepF family. As to quaternary structure, homodimer. Interacts with FtsZ.

Its subcellular location is the cytoplasm. Its function is as follows. Cell division protein that is part of the divisome complex and is recruited early to the Z-ring. Probably stimulates Z-ring formation, perhaps through the cross-linking of FtsZ protofilaments. Its function overlaps with FtsA. This chain is Cell division protein SepF, found in Clostridium beijerinckii (strain ATCC 51743 / NCIMB 8052) (Clostridium acetobutylicum).